We begin with the raw amino-acid sequence, 445 residues long: GTPase Obg (445 aa).

Residues 7–164 enclose the Obg domain; the sequence is PEFVDCVTVE…RKLRLEVKSI (158 aa). In terms of domain architecture, OBG-type G spans 165 to 342; sequence ADVALVGFPS…FTLRLGEICQ (178 aa). GTP-binding positions include 171-178, 196-200, 217-220, 291-294, and 323-325; these read GFPSVGKS, FTTLH, DVPG, NKID, and SAV. Mg(2+)-binding residues include serine 178 and threonine 198. Residues 357 to 434 enclose the OCT domain; that stretch reads IPAKNTPEFS…IGGVIFTWDP (78 aa).

This sequence belongs to the TRAFAC class OBG-HflX-like GTPase superfamily. OBG GTPase family. In terms of assembly, monomer. Mg(2+) serves as cofactor.

It localises to the cytoplasm. An essential GTPase which binds GTP, GDP and possibly (p)ppGpp with moderate affinity, with high nucleotide exchange rates and a fairly low GTP hydrolysis rate. Plays a role in control of the cell cycle, stress response, ribosome biogenesis and in those bacteria that undergo differentiation, in morphogenesis control. This Tropheryma whipplei (strain Twist) (Whipple's bacillus) protein is GTPase Obg.